Consider the following 348-residue polypeptide: MADTFFFTPSRRLTVANVAELTGAKLLNPEFSNTVINTLSSLESAGKGSLVFVEHRKFSDALVGSSAVAVFCTNEIVFKVPESMAILVTSTPQRDFAQIGRILFPDSVKPMPWFGQREISPHAHIHPSAKLAGDVCIEAGAVIGRNVEIGSGSLIASTAVIGENCRIGCDCYIAPKVTVQYSLIGDKVHLYPGACIGQDGFGYIGGASGIEKVPQLGRVIIEDGVEIGANTTIDRGTFEDTIIGEGSKIDNLVQIAHNVKIGRYCLIAAQCGIAGSTSIGDMSQLGGSVGVADHIVIGKYVQIAAGSGVMNDIPDGEKWGGSPARPFKQWFREVAALRSIGKVKKEKR.

The Proton acceptor role is filled by His-257.

It belongs to the transferase hexapeptide repeat family. LpxD subfamily. In terms of assembly, homotrimer.

The catalysed reaction is a UDP-3-O-[(3R)-3-hydroxyacyl]-alpha-D-glucosamine + a (3R)-hydroxyacyl-[ACP] = a UDP-2-N,3-O-bis[(3R)-3-hydroxyacyl]-alpha-D-glucosamine + holo-[ACP] + H(+). It functions in the pathway bacterial outer membrane biogenesis; LPS lipid A biosynthesis. Catalyzes the N-acylation of UDP-3-O-acylglucosamine using 3-hydroxyacyl-ACP as the acyl donor. Is involved in the biosynthesis of lipid A, a phosphorylated glycolipid that anchors the lipopolysaccharide to the outer membrane of the cell. In Bartonella henselae (strain ATCC 49882 / DSM 28221 / CCUG 30454 / Houston 1) (Rochalimaea henselae), this protein is UDP-3-O-acylglucosamine N-acyltransferase.